Consider the following 372-residue polypeptide: Lysophosphatidic acid receptor 5 (372 aa).

Residues 1–26 (MLANSSSTNSSVLPCPDYRPTHRLHL) are Extracellular-facing. Asparagine 4 and asparagine 9 each carry an N-linked (GlcNAc...) asparagine glycan. The chain crosses the membrane as a helical span at residues 27-47 (VVYSLVLAAGLPLNALALWVF). The Cytoplasmic portion of the chain corresponds to 48–55 (LRALRVHS). A helical membrane pass occupies residues 56 to 76 (VVSVYMCNLAASDLLFTLSLP). Topologically, residues 77–96 (VRLSYYALHHWPFPDLLCQT) are extracellular. An intrachain disulfide couples cysteine 94 to cysteine 175. A helical membrane pass occupies residues 97–117 (TGAIFQMNMYGSCIFLMLINV). Over 118 to 136 (DRYAAIVHPLRLRHLRRPR) the chain is Cytoplasmic. Residues 137–157 (VARLLCLGVWALILVFAVPAA) traverse the membrane as a helical segment. The Extracellular portion of the chain corresponds to 158-187 (RVHRPSRCRYRDLEVRLCFESFSDELWKGR). A helical transmembrane segment spans residues 188 to 208 (LLPLVLLAEALGFLLPLAAVV). The Cytoplasmic portion of the chain corresponds to 209–239 (YSSGRVFWTLARPDATQSQRRRKTVRLLLAN). Residues 240 to 260 (LVIFLLCFVPYNSTLAVYGLL) form a helical membrane-spanning segment. The Extracellular portion of the chain corresponds to 261-276 (RSKLVAASVPARDRVR). Residues 277 to 297 (GVLMVMVLLAGANCVLDPLVY) traverse the membrane as a helical segment. At 298-372 (YFSAEGFRNT…FTQCPQDSAL (75 aa)) the chain is on the cytoplasmic side. Residues 312–372 (GTPHRARTSA…FTQCPQDSAL (61 aa)) are disordered. Composition is skewed to polar residues over residues 332–341 (SERSAVTTDA) and 357–372 (SHSL…DSAL).

The protein belongs to the G-protein coupled receptor 1 family. In terms of tissue distribution, not expressed in frontal cortex, basal forebrain, caudate putamen, thalamus, or hippocampus.

Its subcellular location is the cell membrane. Functionally, receptor for lysophosphatidic acid (LPA), a mediator of diverse cellular activities. In Homo sapiens (Human), this protein is Lysophosphatidic acid receptor 5 (LPAR5).